A 107-amino-acid chain; its full sequence is Integration host factor subunit beta (107 aa).

Residues 56 to 107 (RPSRVGRNPKSGEKVLVPEKHVPHFKPGKELRERVDRNAGEPLKADAADDDL) form a disordered region. Residues 65–107 (KSGEKVLVPEKHVPHFKPGKELRERVDRNAGEPLKADAADDDL) show a composition bias toward basic and acidic residues.

Belongs to the bacterial histone-like protein family. As to quaternary structure, heterodimer of an alpha and a beta chain.

Functionally, this protein is one of the two subunits of integration host factor, a specific DNA-binding protein that functions in genetic recombination as well as in transcriptional and translational control. The sequence is that of Integration host factor subunit beta from Paraburkholderia phymatum (strain DSM 17167 / CIP 108236 / LMG 21445 / STM815) (Burkholderia phymatum).